The following is a 504-amino-acid chain: Cytochrome P450 71B4 (504 aa).

A helical membrane pass occupies residues 1–21 (MVSLLSFFLLLLVPIFFLLIF). Cysteine 446 contributes to the heme binding site.

This sequence belongs to the cytochrome P450 family. Heme serves as cofactor.

The protein localises to the membrane. In Arabidopsis thaliana (Mouse-ear cress), this protein is Cytochrome P450 71B4 (CYP71B4).